Consider the following 165-residue polypeptide: Nucleotide-binding protein Pro_0479 (165 aa).

This sequence belongs to the YajQ family.

Its function is as follows. Nucleotide-binding protein. The protein is Nucleotide-binding protein Pro_0479 of Prochlorococcus marinus (strain SARG / CCMP1375 / SS120).